The primary structure comprises 429 residues: Phosphoribosylamine--glycine ligase (429 aa).

Residues 109–316 enclose the ATP-grasp domain; that stretch reads KDFLARHQIP…LVDLCLAACD (208 aa). Residue 135-196 participates in ATP binding; that stretch reads LREKGAPIVI…EEFLDGEEAS (62 aa). The Mg(2+) site is built by Glu286 and Asn288.

Belongs to the GARS family. Monomer. The cofactor is Mg(2+). Mn(2+) is required as a cofactor.

The catalysed reaction is 5-phospho-beta-D-ribosylamine + glycine + ATP = N(1)-(5-phospho-beta-D-ribosyl)glycinamide + ADP + phosphate + H(+). The protein operates within purine metabolism; IMP biosynthesis via de novo pathway; N(1)-(5-phospho-D-ribosyl)glycinamide from 5-phospho-alpha-D-ribose 1-diphosphate: step 2/2. This is Phosphoribosylamine--glycine ligase from Salmonella typhi.